The primary structure comprises 271 residues: Tryptophan synthase alpha chain (271 aa).

Catalysis depends on proton acceptor residues Glu49 and Asp60.

This sequence belongs to the TrpA family. As to quaternary structure, tetramer of two alpha and two beta chains.

It carries out the reaction (1S,2R)-1-C-(indol-3-yl)glycerol 3-phosphate + L-serine = D-glyceraldehyde 3-phosphate + L-tryptophan + H2O. The protein operates within amino-acid biosynthesis; L-tryptophan biosynthesis; L-tryptophan from chorismate: step 5/5. Its function is as follows. The alpha subunit is responsible for the aldol cleavage of indoleglycerol phosphate to indole and glyceraldehyde 3-phosphate. This Burkholderia pseudomallei (strain K96243) protein is Tryptophan synthase alpha chain.